Consider the following 374-residue polypeptide: Chaperone protein DnaJ (374 aa).

The J domain maps to 5-70 (DYYEVLGISR…SKRAAYDQFG (66 aa)). The CR-type zinc finger occupies 129 to 207 (GKTVKINIPG…CHGQGRVRQE (79 aa)). Residues Cys-142, Cys-145, Cys-159, Cys-162, Cys-181, Cys-184, Cys-195, and Cys-198 each contribute to the Zn(2+) site. CXXCXGXG motif repeat units follow at residues 142–149 (CEACDGSG), 159–166 (CGTCQGMG), 181–188 (CPTCRGSG), and 195–202 (CKSCHGQG). Positions 216 to 238 (PGVDTGDRIRLSGEGEMGVDGGP) are disordered.

This sequence belongs to the DnaJ family. In terms of assembly, homodimer. Zn(2+) serves as cofactor.

It is found in the cytoplasm. Its function is as follows. Participates actively in the response to hyperosmotic and heat shock by preventing the aggregation of stress-denatured proteins and by disaggregating proteins, also in an autonomous, DnaK-independent fashion. Unfolded proteins bind initially to DnaJ; upon interaction with the DnaJ-bound protein, DnaK hydrolyzes its bound ATP, resulting in the formation of a stable complex. GrpE releases ADP from DnaK; ATP binding to DnaK triggers the release of the substrate protein, thus completing the reaction cycle. Several rounds of ATP-dependent interactions between DnaJ, DnaK and GrpE are required for fully efficient folding. Also involved, together with DnaK and GrpE, in the DNA replication of plasmids through activation of initiation proteins. The polypeptide is Chaperone protein DnaJ (Marinobacter nauticus (strain ATCC 700491 / DSM 11845 / VT8) (Marinobacter aquaeolei)).